The following is a 255-amino-acid chain: Hydroxyacylglutathione hydrolase (255 aa).

Zn(2+) contacts are provided by His56, His58, Asp60, His61, His114, Asp133, and His171.

The protein belongs to the metallo-beta-lactamase superfamily. Glyoxalase II family. Monomer. It depends on Zn(2+) as a cofactor.

It carries out the reaction an S-(2-hydroxyacyl)glutathione + H2O = a 2-hydroxy carboxylate + glutathione + H(+). The protein operates within secondary metabolite metabolism; methylglyoxal degradation; (R)-lactate from methylglyoxal: step 2/2. Its function is as follows. Thiolesterase that catalyzes the hydrolysis of S-D-lactoyl-glutathione to form glutathione and D-lactic acid. The chain is Hydroxyacylglutathione hydrolase from Rhodopseudomonas palustris (strain BisB5).